We begin with the raw amino-acid sequence, 250 residues long: MSFKVAIPARYASTRLPGKPLLMLGGKPMIQHVHERALACGAEEVVIATDDTRISDVAEGFGARVVLTDAHHESGSDRIAEVATELGWRDDDIVVNLQGDEPLTPPDILHQVAEALERHTDAAMATLCTPIETVEQMLDPNVVKVVRDAADYALYFSRAPIPWDRNVGRDVTHRSLEGCHRHIGLYAYRVGFLKAFAAMSPCALELTERLEQLRALHAGARIQCPVASQVPGQGVDVSSDVERVEKLLRA.

This sequence belongs to the KdsB family.

The protein localises to the cytoplasm. It carries out the reaction 3-deoxy-alpha-D-manno-oct-2-ulosonate + CTP = CMP-3-deoxy-beta-D-manno-octulosonate + diphosphate. It functions in the pathway nucleotide-sugar biosynthesis; CMP-3-deoxy-D-manno-octulosonate biosynthesis; CMP-3-deoxy-D-manno-octulosonate from 3-deoxy-D-manno-octulosonate and CTP: step 1/1. It participates in bacterial outer membrane biogenesis; lipopolysaccharide biosynthesis. Activates KDO (a required 8-carbon sugar) for incorporation into bacterial lipopolysaccharide in Gram-negative bacteria. The polypeptide is 3-deoxy-manno-octulosonate cytidylyltransferase (Thioalkalivibrio sulfidiphilus (strain HL-EbGR7)).